We begin with the raw amino-acid sequence, 734 residues long: MNTSLRLNHYWITCADGLETLLQEEIEQLGTKVTERKAGRLIIEGTLEHAYRICMWSRLASRVLLPIHTYELERTHDARDVAEELYEGAISFDWSLIFAPQSTFAIRLHAEREIKVNTQFATLRVKDGVVDSFMEAVGRRPSIDTKQPEITLYVLAGKTEHTYCLDLSGDSLHKRGYRRFMTDAPIKENLAAAILQKAKLKERNPEIVLDPMCGSGTFIIEALMILTDRAPGLVRRFGFNGWHGHDRELWLSLKAEAAERHEKALEQPLPKFYAYDADWEAVKATRENIIAAGFEKLLGDIQIEERTLADWPDFGAENKTAFIVTNPPYGERLGDKASNRSLYLGLSALLQKNFPNQYAAIIAAQIEQADVLAFEAPETLRLMNGKLPIYVRFGTVKPEKVTQPFLANWQAQPVEMEEAQDFANRLQKNMTALKKWATKENIYCLRLYDADLPDFNLAVDLYGDRLHVQEYAPPKKIDPEKAKKRFNLALAAIRAVTGLNRDAIFIKTRARQTGTNQYTKQSTANKRFIVQEGKAKILVNLTDYLDTGLFLDHRQMRLRIAKEARGKHFLNLYSYTSTASLHAALGGAASTTSVDLSNTYLSWSKENFVLNGLTVDHADEQHMFFASDCFEWLKEGHEQYDLIFIDPPTFSNSKKFHGTFDVQRDHVSLIKRAMNRLTSEGTLYFSNNYRGFEMDEEIEALYEVEEITSETIGPDFKRNQKIHRAWKIQHPGLN.

The THUMP domain maps to 49-167 (HAYRICMWSR…KTEHTYCLDL (119 aa)).

It belongs to the methyltransferase superfamily. RlmKL family.

It is found in the cytoplasm. It catalyses the reaction guanosine(2445) in 23S rRNA + S-adenosyl-L-methionine = N(2)-methylguanosine(2445) in 23S rRNA + S-adenosyl-L-homocysteine + H(+). The catalysed reaction is guanosine(2069) in 23S rRNA + S-adenosyl-L-methionine = N(2)-methylguanosine(2069) in 23S rRNA + S-adenosyl-L-homocysteine + H(+). Functionally, specifically methylates the guanine in position 2445 (m2G2445) and the guanine in position 2069 (m7G2069) of 23S rRNA. The polypeptide is Ribosomal RNA large subunit methyltransferase K/L (Acinetobacter baumannii (strain ACICU)).